The chain runs to 351 residues: Transaldolase (351 aa).

Lysine 138 acts as the Schiff-base intermediate with substrate in catalysis.

This sequence belongs to the transaldolase family. Type 2 subfamily.

The protein resides in the cytoplasm. The enzyme catalyses D-sedoheptulose 7-phosphate + D-glyceraldehyde 3-phosphate = D-erythrose 4-phosphate + beta-D-fructose 6-phosphate. The protein operates within carbohydrate degradation; pentose phosphate pathway; D-glyceraldehyde 3-phosphate and beta-D-fructose 6-phosphate from D-ribose 5-phosphate and D-xylulose 5-phosphate (non-oxidative stage): step 2/3. Its function is as follows. Transaldolase is important for the balance of metabolites in the pentose-phosphate pathway. The sequence is that of Transaldolase from Neisseria meningitidis serogroup C (strain 053442).